Consider the following 555-residue polypeptide: Membrane protein insertase YidC (555 aa).

A helical membrane pass occupies residues 7–24 (ILWVIFSMSLVLLYDNWQ). Positions 62-81 (APGAAGTAAPAAPQAAAQPT) are disordered. The next 5 membrane-spanning stretches (helical) occupy residues 334 to 354 (LELVKDYGWLTILAKPLFWLL), 360 to 380 (FLGNWGWSIIALTVLIKLVFF), 430 to 450 (LGGCLPIVIQIPVFIALYWVL), 468 to 488 (LSVPDPFYILPIVMAVSMFVQ), and 503 to 523 (VMMIMPLVFSVMFFFFPAGLV).

It belongs to the OXA1/ALB3/YidC family. Type 1 subfamily. Interacts with the Sec translocase complex via SecD. Specifically interacts with transmembrane segments of nascent integral membrane proteins during membrane integration.

The protein localises to the cell inner membrane. Required for the insertion and/or proper folding and/or complex formation of integral membrane proteins into the membrane. Involved in integration of membrane proteins that insert both dependently and independently of the Sec translocase complex, as well as at least some lipoproteins. Aids folding of multispanning membrane proteins. The sequence is that of Membrane protein insertase YidC from Cupriavidus necator (strain ATCC 17699 / DSM 428 / KCTC 22496 / NCIMB 10442 / H16 / Stanier 337) (Ralstonia eutropha).